The following is a 147-amino-acid chain: Protein phosphatase 1 regulatory subunit 14A (147 aa).

Residues 1 to 11 show a composition bias toward basic residues; sequence MAAQRLGKRVL. The interval 1 to 37 is disordered; that stretch reads MAAQRLGKRVLSKLQSPSRARGPGGSPGGLQKRHARV. At Ser-26 the chain carries Phosphoserine. Positions 35 to 120 are inhibitory; that stretch reads ARVTVKYDRR…LLAKLQGLHR (86 aa). Thr-38 bears the Phosphothreonine; by PKC mark. The segment at 118–147 is disordered; the sequence is LHRQPGLRQPSPSHDGSLSPLQDRARTAHP. A compositionally biased stretch (polar residues) spans 127–137; that stretch reads PSPSHDGSLSP. Phosphoserine is present on residues Ser-128, Ser-134, and Ser-136.

Belongs to the PP1 inhibitor family. As to expression, isoform 1 is detected in aorta and testis. Isoform 2 is detected in aorta.

It is found in the cytoplasm. In terms of biological role, inhibitor of PPP1CA. Has over 1000-fold higher inhibitory activity when phosphorylated, creating a molecular switch for regulating the phosphorylation status of PPP1CA substrates and smooth muscle contraction. This Homo sapiens (Human) protein is Protein phosphatase 1 regulatory subunit 14A (PPP1R14A).